Consider the following 2835-residue polypeptide: Vanchrobactin synthetase VabF (2835 aa).

Residues 16-452 are condensation 1; that stretch reads EDQWPLIGTQ…IPPSEKQQIT (437 aa). Residues 473-880 are adenylation 1; it reads QQTVESKPNE…GRCDHQIKIR (408 aa). Residues 988-1062 enclose the Carrier 1 domain; sequence APITQPEQLL…MMAGQMVPLQ (75 aa). Serine 1023 bears the O-(pantetheine 4'-phosphoryl)serine mark. Condensation regions lie at residues 1081-1499 and 1539-1961; these read WFEE…KIQQ and DVLP…EWDL. The segment at 1992-2394 is adenylation 2; that stretch reads QQQRSPHQLA…GRSDDQIKIR (403 aa). Positions 2503-2578 constitute a Carrier 2 domain; that stretch reads NAHPGLETQL…KLASLLLDDD (76 aa). Serine 2538 carries the O-(pantetheine 4'-phosphoryl)serine modification. The thioesterase stretch occupies residues 2601-2821; it reads ALFCVNSASG…APENVRQIGE (221 aa).

This sequence belongs to the NRP synthetase family. It depends on pantetheine 4'-phosphate as a cofactor.

The enzyme catalyses holo-[peptidyl-carrier protein] + L-arginine + ATP = L-arginyl-[peptidyl-carrier protein] + AMP + diphosphate. It catalyses the reaction holo-[peptidyl-carrier protein] + L-serine + ATP = L-seryl-[peptidyl-carrier protein] + AMP + diphosphate. It participates in siderophore biosynthesis. Involved in the synthesis of the siderophore vanchrobactin. Probably adenylates L-arginine via its first adenylation domain and loads it onto its first peptidyl carrier domain via a thioester linkage to the phosphopanthetheine moiety. In addition, may adenylate L-serine via its second adenylation domain and loads it onto its second peptidyl carrier domain via a thioester linkage to the phosphopanthetheine moiety. The thioesterase domain may release vanchrobactin after condensation of the siderophore components. This Vibrio anguillarum (Listonella anguillarum) protein is Vanchrobactin synthetase VabF.